Here is a 159-residue protein sequence, read N- to C-terminus: Protransforming growth factor alpha (159 aa).

Residues 1–23 (MVPATGQLALLALGILLAVCQAL) form the signal peptide. A propeptide spans 24–38 (ENSTSPLSDSPVAAA) (removed in mature form). The Extracellular portion of the chain corresponds to 24 to 97 (ENSTSPLSDS…AVVAASQKKQ (74 aa)). A glycan (N-linked (GlcNAc...) asparagine) is linked at Asn-25. In terms of domain architecture, EGF-like spans 44 to 83 (NKCPDSHTQYCFHGTCRFLVQEEKPACVCHSGYVGVRCEH). 3 disulfides stabilise this stretch: Cys-46–Cys-59, Cys-54–Cys-70, and Cys-72–Cys-81. A propeptide spans 89-159 (VVAASQKKQA…TACCHSETVV (71 aa)) (removed in mature form). A helical membrane pass occupies residues 98 to 123 (AITALVVVSIVALAVLIITCVLIHCC). Topologically, residues 124–159 (QLRKHCEWCRALVCRHEKPSALLKGRTACCHSETVV) are cytoplasmic. 2 S-palmitoyl cysteine lipidation sites follow: Cys-152 and Cys-153.

Interacts with the PDZ domains of SDCBP and SNTA1. The interaction with SDCBP, is required for the targeting to the cell surface. In the endoplasmic reticulum, in its immature form (i.e. with a prosegment and lacking full N-glycosylation), interacts with CNIH. In the Golgi apparatus, may form a complex with CNIH and GORASP2. Interacts (via cytoplasmic C-terminal domain) with NKD2. Interacts with MAGI3.

The protein localises to the secreted. It localises to the extracellular space. Its subcellular location is the cell membrane. In terms of biological role, TGF alpha is a mitogenic polypeptide that is able to bind to the EGF receptor/EGFR and to act synergistically with TGF beta to promote anchorage-independent cell proliferation in soft agar. The polypeptide is Protransforming growth factor alpha (Tgfa) (Mus musculus (Mouse)).